We begin with the raw amino-acid sequence, 233 residues long: Aspartate/glutamate leucyltransferase (233 aa).

It belongs to the R-transferase family. Bpt subfamily.

Its subcellular location is the cytoplasm. The catalysed reaction is N-terminal L-glutamyl-[protein] + L-leucyl-tRNA(Leu) = N-terminal L-leucyl-L-glutamyl-[protein] + tRNA(Leu) + H(+). It carries out the reaction N-terminal L-aspartyl-[protein] + L-leucyl-tRNA(Leu) = N-terminal L-leucyl-L-aspartyl-[protein] + tRNA(Leu) + H(+). Functions in the N-end rule pathway of protein degradation where it conjugates Leu from its aminoacyl-tRNA to the N-termini of proteins containing an N-terminal aspartate or glutamate. In Vibrio campbellii (strain ATCC BAA-1116), this protein is Aspartate/glutamate leucyltransferase.